The following is a 480-amino-acid chain: ATP-grasp enzyme ankG (480 aa).

A disordered region spans residues 1 to 30 (MYQISLKATKSAAEPTSSTDASHDDRQVER). The span at 21–30 (ASHDDRQVER) shows a compositional bias: basic and acidic residues.

The enzyme catalyses NK13650 D + L-aspartate + ATP = NK13650 C + AMP + diphosphate + H(+). It catalyses the reaction NK13650 B + L-aspartate + ATP = NK13650 A + AMP + diphosphate + H(+). Its pathway is secondary metabolite biosynthesis. In terms of biological role, ATP-grasp enzyme; part of the ank cluster that mediates the biosynthesis of NK13650 C, a highly modified cyclo-arginine-tyrosine dipeptide. AnkG catalyzes the last step of the pathway via amidation NK13650 D with L-Asp to produce NK13650 C. AnkG also amidates NK13650 B into NK13650 A. Within the pathway, the cyclodipeptide synthase ankA acts as the scaffold-generating enzyme and is responsible for formation of the cyclo-Arg-Tyr diketopiperazine (cRY) from L-Arg and L-Tyr. The ankA product cRY is desaturated by the cytochrome P450 monooxygenase ankB to yield a dehydro-cyclodipeptide intermediate. The FAD-dependent monooxygenase ankC then installs the m-OH, ankD catalyzes the attachment of L-homoserine, and ankE ligates citrate to the ankD product to yield NK13650 B. The O-methyltransferase ankF is responsible for methylation of the C-17 phenol group of NK13650 B to produce NK13650 D. Amidation of NK13650 D with L-Asp by ankG then leads to the production of NK13650 C, whereas amidation of NK13650 B produces NK13650 A. This Aspergillus thermomutatus (Neosartorya pseudofischeri) protein is ATP-grasp enzyme ankG.